The sequence spans 407 residues: Phosphopentomutase (407 aa).

Mn(2+) is bound by residues Asp-10, Asp-306, His-311, Asp-347, His-348, and His-359.

It belongs to the phosphopentomutase family. Requires Mn(2+) as cofactor.

The protein localises to the cytoplasm. The catalysed reaction is 2-deoxy-alpha-D-ribose 1-phosphate = 2-deoxy-D-ribose 5-phosphate. It catalyses the reaction alpha-D-ribose 1-phosphate = D-ribose 5-phosphate. Its pathway is carbohydrate degradation; 2-deoxy-D-ribose 1-phosphate degradation; D-glyceraldehyde 3-phosphate and acetaldehyde from 2-deoxy-alpha-D-ribose 1-phosphate: step 1/2. Functionally, isomerase that catalyzes the conversion of deoxy-ribose 1-phosphate (dRib-1-P) and ribose 1-phosphate (Rib-1-P) to deoxy-ribose 5-phosphate (dRib-5-P) and ribose 5-phosphate (Rib-5-P), respectively. This chain is Phosphopentomutase, found in Salmonella paratyphi C (strain RKS4594).